Here is a 311-residue protein sequence, read N- to C-terminus: Metal-staphylopine import system permease protein CntB (311 aa).

A run of 6 helical transmembrane segments spans residues 9-29, 105-125, 139-159, 173-193, 237-257, and 274-294; these read IALM…LTYI, LTII…VVSA, VAFF…IIYV, GPES…GIYF, IFCM…YIFA, and FPVI…FNTL. One can recognise an ABC transmembrane type-1 domain in the interval 99 to 295; it reads FMNTLKLTII…VLFIVFNTLA (197 aa).

Belongs to the binding-protein-dependent transport system permease family. As to quaternary structure, the complex is composed of two ATP-binding proteins (CntD and CntF), two transmembrane proteins (CntB and CntC) and a solute-binding protein (CntA).

The protein resides in the cell membrane. Part of the ABC transporter complex CntABCDF (Opp1) involved in the uptake of metal in complex with the metallophore staphylopine (StP). May be involved in the import of a large array of divalent metals ions such as nickel, cobalt, zinc, copper and iron. Probably responsible for the translocation of the substrate across the membrane. The chain is Metal-staphylopine import system permease protein CntB from Staphylococcus aureus (strain Mu50 / ATCC 700699).